Reading from the N-terminus, the 108-residue chain is Putative transmembrane protein ORF108 (108 aa).

3 consecutive transmembrane segments (helical) span residues 11–31 (FIMG…SSII), 33–53 (IAMT…TVHF), and 69–89 (VGFL…LLII).

It localises to the host membrane. This Acidianus hospitalis (AFV-1) protein is Putative transmembrane protein ORF108.